Reading from the N-terminus, the 119-residue chain is Large ribosomal subunit protein uL18 (119 aa).

This sequence belongs to the universal ribosomal protein uL18 family. Part of the 50S ribosomal subunit; part of the 5S rRNA/L5/L18/L25 subcomplex. Contacts the 5S and 23S rRNAs.

Functionally, this is one of the proteins that bind and probably mediate the attachment of the 5S RNA into the large ribosomal subunit, where it forms part of the central protuberance. The sequence is that of Large ribosomal subunit protein uL18 from Clostridium botulinum (strain Alaska E43 / Type E3).